The sequence spans 320 residues: ATP-dependent 6-phosphofructokinase (320 aa).

Glycine 12 lines the ATP pocket. ADP contacts are provided by residues 22–26 and 55–60; these read RGVVR and RYSVSD. ATP is bound by residues 73–74 and 103–106; these read RF and GDGS. Aspartate 104 contributes to the Mg(2+) binding site. Position 126 to 128 (126 to 128) interacts with substrate; it reads TID. Aspartate 128 (proton acceptor) is an active-site residue. Arginine 155 contributes to the ADP binding site. Substrate contacts are provided by residues arginine 163 and 170-172; that span reads MGR. ADP-binding positions include 186–188, lysine 212, and 214–216; these read GCE and KKH. Residues glutamate 223, arginine 244, and 250–253 contribute to the substrate site; that span reads HIQR.

This sequence belongs to the phosphofructokinase type A (PFKA) family. ATP-dependent PFK group I subfamily. Prokaryotic clade 'B1' sub-subfamily. As to quaternary structure, homotetramer. The cofactor is Mg(2+).

It localises to the cytoplasm. The catalysed reaction is beta-D-fructose 6-phosphate + ATP = beta-D-fructose 1,6-bisphosphate + ADP + H(+). The protein operates within carbohydrate degradation; glycolysis; D-glyceraldehyde 3-phosphate and glycerone phosphate from D-glucose: step 3/4. With respect to regulation, allosterically activated by ADP and other diphosphonucleosides, and allosterically inhibited by phosphoenolpyruvate. Catalyzes the phosphorylation of D-fructose 6-phosphate to fructose 1,6-bisphosphate by ATP, the first committing step of glycolysis. This chain is ATP-dependent 6-phosphofructokinase, found in Sodalis glossinidius (strain morsitans).